A 67-amino-acid chain; its full sequence is Non-specific lipid-transfer protein 2 (67 aa).

Disulfide bonds link Cys-3–Cys-35, Cys-11–Cys-25, Cys-26–Cys-61, and Cys-37–Cys-67.

Belongs to the plant LTP family. In terms of assembly, monomer. In terms of processing, disulfide bonds.

Its function is as follows. Plant non-specific lipid-transfer proteins transfer phospholipids as well as galactolipids across membranes. May play a role in wax or cutin deposition in the cell walls of expanding epidermal cells and certain secretory tissues. This Apium graveolens var. rapaceum (Celeriac) protein is Non-specific lipid-transfer protein 2.